Here is a 171-residue protein sequence, read N- to C-terminus: Ribosome maturation factor RimM (171 aa).

Positions 97–169 (DGEFYYHEII…RVDVDIMEGL (73 aa)) constitute a PRC barrel domain.

The protein belongs to the RimM family. In terms of assembly, binds ribosomal protein uS19.

It localises to the cytoplasm. An accessory protein needed during the final step in the assembly of 30S ribosomal subunit, possibly for assembly of the head region. Essential for efficient processing of 16S rRNA. May be needed both before and after RbfA during the maturation of 16S rRNA. It has affinity for free ribosomal 30S subunits but not for 70S ribosomes. In Lactococcus lactis subsp. cremoris (strain SK11), this protein is Ribosome maturation factor RimM.